We begin with the raw amino-acid sequence, 327 residues long: rRNA 2'-O-methyltransferase fibrillarin (327 aa).

The disordered stretch occupies residues methionine 1–valine 96. An asymmetric dimethylarginine mark is found at arginine 10, arginine 19, arginine 44, arginine 49, arginine 55, arginine 65, arginine 69, and arginine 78. Residues glycine 22–glycine 56 are compositionally biased toward basic and acidic residues. Residues aspartate 73–glycine 90 are compositionally biased toward gly residues. Residues threonine 181–threonine 182, glutamate 200–phenylalanine 201, aspartate 225–alanine 226, and aspartate 245–glutamine 248 contribute to the S-adenosyl-L-methionine site.

It belongs to the methyltransferase superfamily. Fibrillarin family. Component of box C/D small nucleolar ribonucleoprotein (snoRNP) particles. It is associated with the U3, U8 and U13 small nuclear RNAs. By homology to other fibrillarins, some or all of the N-terminal domain arginines are modified to asymmetric dimethylarginine (DMA).

Its subcellular location is the nucleus. It localises to the nucleolus. It carries out the reaction L-glutaminyl-[histone H2A] + S-adenosyl-L-methionine = N(5)-methyl-L-glutaminyl-[histone H2A] + S-adenosyl-L-homocysteine + H(+). In terms of biological role, S-adenosyl-L-methionine-dependent methyltransferase that has the ability to methylate both RNAs and proteins. Involved in pre-rRNA processing. Utilizes the methyl donor S-adenosyl-L-methionine to catalyze the site-specific 2'-hydroxyl methylation of ribose moieties in pre-ribosomal RNA. Site specificity is provided by a guide RNA that base pairs with the substrate. Methylation occurs at a characteristic distance from the sequence involved in base pairing with the guide RNA. Also acts as a protein methyltransferase by mediating methylation of 'Gln-105' of histone H2A (H2AQ105me), a modification that impairs binding of the FACT complex and is specifically present at 35S ribosomal DNA locus. The chain is rRNA 2'-O-methyltransferase fibrillarin from Giardia intestinalis (Giardia lamblia).